The sequence spans 353 residues: Ribosome biogenesis protein BRX1 homolog (353 aa).

A disordered region spans residues M1–P50. The segment covering D34–I47 has biased composition (basic and acidic residues). The Brix domain maps to E60–G249. K160 participates in a covalent cross-link: Glycyl lysine isopeptide (Lys-Gly) (interchain with G-Cter in SUMO2). S261 is modified (phosphoserine). Residue K276 is modified to N6-acetyllysine. Glycyl lysine isopeptide (Lys-Gly) (interchain with G-Cter in SUMO2) cross-links involve residues K314 and K322. The segment covering R334 to Q344 has biased composition (basic residues). A disordered region spans residues R334 to K353.

It belongs to the BRX1 family.

Its subcellular location is the nucleus. The protein localises to the nucleolus. Functionally, required for biogenesis of the 60S ribosomal subunit. This is Ribosome biogenesis protein BRX1 homolog (Brix1) from Mus musculus (Mouse).